The sequence spans 444 residues: Chromosome partition protein MukF (444 aa).

The leucine-zipper stretch occupies residues 211 to 239 (LDETSGNLRELQDTLNAAGDKLQAQLLRI).

Belongs to the MukF family. In terms of assembly, interacts, and probably forms a ternary complex, with MukE and MukB via its C-terminal region. The complex formation is stimulated by calcium or magnesium. It is required for an interaction between MukE and MukB.

The protein localises to the cytoplasm. Its subcellular location is the nucleoid. In terms of biological role, involved in chromosome condensation, segregation and cell cycle progression. May participate in facilitating chromosome segregation by condensation DNA from both sides of a centrally located replisome during cell division. Not required for mini-F plasmid partitioning. Probably acts via its interaction with MukB and MukE. Overexpression results in anucleate cells. It has a calcium binding activity. The protein is Chromosome partition protein MukF of Actinobacillus succinogenes (strain ATCC 55618 / DSM 22257 / CCUG 43843 / 130Z).